A 296-amino-acid chain; its full sequence is 33 kDa chaperonin (296 aa).

2 cysteine pairs are disulfide-bonded: Cys-238–Cys-240 and Cys-271–Cys-274.

This sequence belongs to the HSP33 family. Post-translationally, under oxidizing conditions two disulfide bonds are formed involving the reactive cysteines. Under reducing conditions zinc is bound to the reactive cysteines and the protein is inactive.

Its subcellular location is the cytoplasm. Redox regulated molecular chaperone. Protects both thermally unfolding and oxidatively damaged proteins from irreversible aggregation. Plays an important role in the bacterial defense system toward oxidative stress. This Clostridium botulinum (strain ATCC 19397 / Type A) protein is 33 kDa chaperonin.